Here is a 55-residue protein sequence, read N- to C-terminus: Trypsin inhibitor ClTI-1 (55 aa).

The Kazal-like domain occupies 1–55 (SIPPACDKYSRLPGCPRDYSPVCGTDGKTYPNECVLCLSNSEENKNVQIYKSGMC). Disulfide bonds link Cys6–Cys37, Cys15–Cys34, and Cys23–Cys55.

It localises to the secreted. Its function is as follows. Inhibits trypsin and plasmin. This is Trypsin inhibitor ClTI-1 from Gallus gallus (Chicken).